Reading from the N-terminus, the 1213-residue chain is MVDVNRFKSMQITLASPSKVRSWSYGEVKKPETINYRTLKPEREGLFDEVIFGPTKDWECACGKYKRIRYKGIVCDRCGVEVTRAKVRRERMGHIELKAPVSHIWYFKGIPSRMGLTLDMSPRALEEVIYFAAYVVIDPKDTPLEPKSLLTEREYREKLQEYGHGSFVAKMGAEAIQDLLKRVDLAAEIAELKEELKSASGQKRIKAVRRLDVLDAFNKSGNKPEWMVLNILPVIPPDLRPMVQLDGGRFAASDLNDLYRRVINRNNRLARLLELNAPGIIVQNEKRMLQEAVDALIDNGRRGRPITGPGSRPLKSLSHMLKGKQGRFRQNLLGKRVDFSGRSVIAVGPTLKMYQCGVPREMAIELFKPFVMREIVAKEYAGNVKAAKRMVERGDERIWDILEEVIKEHPVLLNRAPTLHRLGIQAFEPVLIDGKALRLHPLVCEAYNADFDGDQMAIHVPLSEEAQAEARLLMLAAEHILNPKDGKPVVTPSQDMVLGNYYLTMEDAGREGEGMIFKDKDEAVMAYRNGYAHLHSRVGIAVDSMPNKPWKDSQRHKIMVTTVGKILFNDIMPEDLPYLQEPNNANLTEGTPDKYFLEPGQDIQEVIDGLEINVPFKKKNLGNIIAETFKRFRTTETSAFLDRLKDLGYYHSTLAGLTVGIADIPVIDNKAEIIDAAHHRVEEINKAFRRGLMTDDDRYVAVTTTWREAKEALEKRLIETQDPKNPIVMMMDSGARGNISNFSQLAGMRGLMAAPNGRIMELPILSNFREGLSVLEMFFSTHGARKGMTDTALKTADSGYLTRRLVDVAQDVIIREDDCGTDRGLLICAITDGKEVTETLEERLQGRYTRKSVKHPETGEVLIGADQLITEDMARKIVDAGVEEVTIRSVFTCATRHGVCRHCYGINLATGDAVEVGEAVGTIAAQSIGEPGTQLTMRTFHTGGVASNTDITQGLPRIQEIFEARNPKGEAVITEVKGNVVEIEEDASTRTKKVYVQGKTGMGEYVVPFTARMKVEVGDEVNRGAALTEGSIQPKRLLEVRDTLSVETYLLAEVQKVYRSQGVEIGDKHVEVMVRQMLRKVRVMDPGDTDLLPGTLMDISDFTDANKDIVISGGIPATSRPVLMGITKASLETNSFLSAASFQETTRVLTDAAIRGKKDHLLGLKENVIIGKIIPAGTGMARYRNIEPQAMNEIEVIDHTEVSAEAVFTAEAE.

Positions 60, 62, 75, and 78 each coordinate Zn(2+). Mg(2+)-binding residues include Asp-450, Asp-452, and Asp-454. The Zn(2+) site is built by Cys-819, Cys-893, Cys-900, and Cys-903.

The protein belongs to the RNA polymerase beta' chain family. In terms of assembly, the RNAP catalytic core consists of 2 alpha, 1 beta, 1 beta' and 1 omega subunit. When a sigma factor is associated with the core the holoenzyme is formed, which can initiate transcription. Mg(2+) is required as a cofactor. It depends on Zn(2+) as a cofactor.

It carries out the reaction RNA(n) + a ribonucleoside 5'-triphosphate = RNA(n+1) + diphosphate. In terms of biological role, DNA-dependent RNA polymerase catalyzes the transcription of DNA into RNA using the four ribonucleoside triphosphates as substrates. The sequence is that of DNA-directed RNA polymerase subunit beta' from Streptococcus pyogenes serotype M18 (strain MGAS8232).